The following is a 210-amino-acid chain: Probable molybdenum cofactor guanylyltransferase (210 aa).

GTP contacts are provided by residues 18–20 (LAG), lysine 31, asparagine 59, aspartate 86, and aspartate 111. Aspartate 111 contacts Mg(2+).

It belongs to the MobA family. It depends on Mg(2+) as a cofactor.

It is found in the cytoplasm. The catalysed reaction is Mo-molybdopterin + GTP + H(+) = Mo-molybdopterin guanine dinucleotide + diphosphate. Functionally, transfers a GMP moiety from GTP to Mo-molybdopterin (Mo-MPT) cofactor (Moco or molybdenum cofactor) to form Mo-molybdopterin guanine dinucleotide (Mo-MGD) cofactor. The protein is Probable molybdenum cofactor guanylyltransferase (nasC) of Haloferax mediterranei (strain ATCC 33500 / DSM 1411 / JCM 8866 / NBRC 14739 / NCIMB 2177 / R-4) (Halobacterium mediterranei).